Reading from the N-terminus, the 200-residue chain is ATP-dependent Clp protease proteolytic subunit 1 (200 aa).

Ser98 acts as the Nucleophile in catalysis. His123 is an active-site residue.

Belongs to the peptidase S14 family. In terms of assembly, fourteen ClpP subunits assemble into 2 heptameric rings which stack back to back to give a disk-like structure with a central cavity, resembling the structure of eukaryotic proteasomes.

The protein resides in the cytoplasm. It carries out the reaction Hydrolysis of proteins to small peptides in the presence of ATP and magnesium. alpha-casein is the usual test substrate. In the absence of ATP, only oligopeptides shorter than five residues are hydrolyzed (such as succinyl-Leu-Tyr-|-NHMec, and Leu-Tyr-Leu-|-Tyr-Trp, in which cleavage of the -Tyr-|-Leu- and -Tyr-|-Trp bonds also occurs).. Cleaves peptides in various proteins in a process that requires ATP hydrolysis. Has a chymotrypsin-like activity. Plays a major role in the degradation of misfolded proteins. The sequence is that of ATP-dependent Clp protease proteolytic subunit 1 from Mycobacterium bovis (strain ATCC BAA-935 / AF2122/97).